The following is a 424-amino-acid chain: Histidine--tRNA ligase (424 aa).

This sequence belongs to the class-II aminoacyl-tRNA synthetase family. Homodimer.

The protein localises to the cytoplasm. It catalyses the reaction tRNA(His) + L-histidine + ATP = L-histidyl-tRNA(His) + AMP + diphosphate + H(+). This Shigella boydii serotype 18 (strain CDC 3083-94 / BS512) protein is Histidine--tRNA ligase.